The primary structure comprises 854 residues: Envelope glycoprotein gp160 (854 aa).

The first 20 residues, 1–20, serve as a signal peptide directing secretion; sequence MGRLLIKILIIAIGISIGIG. At 21 to 705 the chain is on the extracellular side; sequence NLYVTVFYGI…IILGLRFAWV (685 aa). N-linked (GlcNAc...) asparagine; by host glycosylation is present at asparagine 35. Cysteine 42 and cysteine 55 form a disulfide bridge. 7 N-linked (GlcNAc...) asparagine; by host glycosylation sites follow: asparagine 68, asparagine 115, asparagine 136, asparagine 153, asparagine 168, asparagine 182, and asparagine 199. Cystine bridges form between cysteine 99–cysteine 207, cysteine 106–cysteine 198, cysteine 111–cysteine 154, cysteine 220–cysteine 250, and cysteine 230–cysteine 242. The tract at residues 111–153 is V1; it reads CVELNGTATTKATTTATTTMTTPCQNCSTEQIEGEMAEEPASN. Positions 154 to 198 are V2; that stretch reads CTFAIAGYQRDVKKNYSMTWYDQELVCNNKTGSEKGSKDCYMIHC. N-linked (GlcNAc...) asparagine; by host glycans are attached at residues asparagine 244, asparagine 255, asparagine 265, asparagine 271, asparagine 283, asparagine 295, asparagine 305, asparagine 355, asparagine 400, asparagine 409, asparagine 458, asparagine 472, and asparagine 478. The tract at residues 300-332 is V3; that stretch reads CRRPGNKTVLPVTIMAGLVFHSQKYNTRLKQAW. The cysteines at positions 300 and 333 are disulfide-linked. 2 disulfide bridges follow: cysteine 382–cysteine 457 and cysteine 389–cysteine 430. The segment at 389 to 430 is V4; that stretch reads CKMDWFINYLNNRTEDAEGTNRTCDKGKPGPGPCVQRTYVAC. A V5 region spans residues 473–481; sequence KSGPINVTL. Residues 523-543 form a fusion peptide region; the sequence is VPFVLGFLGFLGAAGTAMGAA. Residues 586–602 are immunosuppression; it reads LNARVTALEKYLEDQAR. 2 N-linked (GlcNAc...) asparagine; by host glycosylation sites follow: asparagine 630 and asparagine 646. Residues 633–672 adopt a coiled-coil conformation; the sequence is WLEWERQINALEGNITQLLEEAQNQESKNLDLYQKLDDWS. Residues 667 to 688 form an MPER; binding to GalCer region; sequence KLDDWSGFWSWFSLSTWLGYVK. A helical transmembrane segment spans residues 706–726; it reads LWGCIRNIRQGYNPLPQIHIH. Residues 717 to 720 carry the YXXL motif; contains endocytosis signal motif; that stretch reads YNPL. At 727–854 the chain is on the cytoplasmic side; sequence SSAERPDNGG…VRQGLEKVLG (128 aa).

The mature envelope protein (Env) consists of a homotrimer of non-covalently associated gp120-gp41 heterodimers. The resulting complex protrudes from the virus surface as a spike. Interacts with host CD4 and CCR5. Gp120 also interacts with the C-type lectins CD209/DC-SIGN and CLEC4M/DC-SIGNR (collectively referred to as DC-SIGN(R)). As to quaternary structure, the mature envelope protein (Env) consists of a homotrimer of non-covalently associated gp120-gp41 heterodimers. The resulting complex protrudes from the virus surface as a spike. Post-translationally, specific enzymatic cleavages in vivo yield mature proteins. Envelope glycoproteins are synthesized as an inactive precursor that is heavily N-glycosylated and processed likely by host cell furin in the Golgi to yield the mature SU and TM proteins. The cleavage site between SU and TM requires the minimal sequence [KR]-X-[KR]-R.

Its subcellular location is the virion membrane. The protein resides in the host cell membrane. It is found in the host endosome membrane. Functionally, the surface protein gp120 (SU) attaches the virus to the host lymphoid cell by binding to the primary receptor CD4. This interaction induces a structural rearrangement creating a high affinity binding site for a chemokine coreceptor like CCR5. This peculiar 2 stage receptor-interaction strategy allows gp120 to maintain the highly conserved coreceptor-binding site in a cryptic conformation, protected from neutralizing antibodies. These changes are transmitted to the transmembrane protein gp41 and are thought to activate its fusogenic potential by unmasking its fusion peptide. Its function is as follows. Surface protein gp120 (SU) may target the virus to gut-associated lymphoid tissue (GALT) by binding host ITGA4/ITGB7 (alpha-4/beta-7 integrins), a complex that mediates T-cell migration to the GALT. Interaction between gp120 and ITGA4/ITGB7 would allow the virus to enter GALT early in the infection, infecting and killing most of GALT's resting CD4+ T-cells. This T-cell depletion is believed to be the major insult to the host immune system leading to AIDS. The surface protein gp120 is a ligand for CD209/DC-SIGN and CLEC4M/DC-SIGNR, which are respectively found on dendritic cells (DCs), and on endothelial cells of liver sinusoids and lymph node sinuses. These interactions allow capture of viral particles at mucosal surfaces by these cells and subsequent transmission to permissive cells. DCs are professional antigen presenting cells, critical for host immunity by inducing specific immune responses against a broad variety of pathogens. They act as sentinels in various tissues where they take up antigen, process it, and present it to T-cells following migration to lymphoid organs. SIV subverts the migration properties of dendritic cells to gain access to CD4+ T-cells in lymph nodes. Virus transmission to permissive T-cells occurs either in trans (without DCs infection, through viral capture and transmission), or in cis (following DCs productive infection, through the usual CD4-gp120 interaction), thereby inducing a robust infection. In trans infection, bound virions remain infectious over days and it is proposed that they are not degraded, but protected in non-lysosomal acidic organelles within the DCs close to the cell membrane thus contributing to the viral infectious potential during DCs' migration from the periphery to the lymphoid tissues. On arrival at lymphoid tissues, intact virions recycle back to DCs' cell surface allowing virus transmission to CD4+ T-cells. Virion capture also seems to lead to MHC-II-restricted viral antigen presentation, and probably to the activation of SIV-specific CD4+ cells. In terms of biological role, the transmembrane protein gp41 (TM) acts as a class I viral fusion protein. Under the current model, the protein has at least 3 conformational states: pre-fusion native state, pre-hairpin intermediate state, and post-fusion hairpin state. During fusion of viral and target intracellular membranes, the coiled coil regions (heptad repeats) assume a trimer-of-hairpins structure, positioning the fusion peptide in close proximity to the C-terminal region of the ectodomain. The formation of this structure appears to drive apposition and subsequent fusion of viral and target cell membranes. Complete fusion occurs in host cell endosomes. The virus undergoes clathrin-dependent internalization long before endosomal fusion, thus minimizing the surface exposure of conserved viral epitopes during fusion and reducing the efficacy of inhibitors targeting these epitopes. Membranes fusion leads to delivery of the nucleocapsid into the cytoplasm. Functionally, the envelope glycoprotein gp160 precursor down-modulates cell surface CD4 antigen by interacting with it in the endoplasmic reticulum and blocking its transport to the cell surface. Its function is as follows. The gp120-gp41 heterodimer allows rapid transcytosis of the virus through CD4 negative cells such as simple epithelial monolayers of the intestinal, rectal and endocervical epithelial barriers. Both gp120 and gp41 specifically recognize glycosphingolipids galactosyl-ceramide (GalCer) or 3' sulfo-galactosyl-ceramide (GalS) present in the lipid rafts structures of epithelial cells. Binding to these alternative receptors allows the rapid transcytosis of the virus through the epithelial cells. This transcytotic vesicle-mediated transport of virions from the apical side to the basolateral side of the epithelial cells does not involve infection of the cells themselves. This chain is Envelope glycoprotein gp160 (env), found in Cercopithecidae (Old World monkeys).